The primary structure comprises 668 residues: Echinocandin B biosynthetic cluster protein J (668 aa).

5 disordered regions span residues 1 to 20 (MHFA…DQSL), 92 to 113 (YTPP…PPTP), 224 to 322 (PLDH…QSAD), 330 to 349 (EVAE…SIPT), and 483 to 506 (NCSS…PPLK). Residues 96 to 106 (SLDSRSSATPP) show a composition bias toward polar residues. A compositionally biased stretch (pro residues) spans 264–275 (NPEPGTPTPPSP). Residues 311 to 322 (YRSTPSPCQSAD) are compositionally biased toward polar residues. The span at 484-494 (CSSSSCSSSAS) shows a compositional bias: low complexity. The segment covering 495 to 505 (KKNEEKREPPL) has biased composition (basic and acidic residues).

Its pathway is antifungal biosynthesis. Its function is as follows. Part of the gene cluster that mediates the biosynthesis of echinocandin B, a fungal lipidated cyclic hexapeptide that acts as an antifungal agent. Linoleoyl-AMP, produced by the fatty-acyl-AMP ligase ecdI, is transferred to the initiation carrier domain (T0) of ecdA. The linoleoyl-S-phosphopantetheinyl-T0 is sequentially extended with L-ornithine, L-threonine, L-proline, L-homotyrosine, L-threonine, and 4R-methyl-L-proline to form the linear hexapeptide. Thereafter, the terminal condensation (C7) performs macrocyclization of the NRPS product and the cyclic scaffold is released from ecdA. All six of the amino acid residues are hydroxylated, including 4R,5R-dihydroxy-L-ornithine, 4R-hydroxyl-L-proline, 3S,4S-dihydroxy-L-homotyrosine, and 3S-hydroxyl-4S-methyl-L-prolin. In the pathway, all the hydroxylation reactions are proposed to occur following completion of the cyclic peptide, so the unhydroxylated precursor produced by ecdA will undergo six rounds of hydroxylation. Five hydroxylase genes (ecdG, ecdH, ecdK, htyE and htyF) are embedded within the echinocandin B (ecd) and L-homotyrosine (hty) clusters. This is Echinocandin B biosynthetic cluster protein J from Aspergillus rugulosus (Emericella rugulosa).